Consider the following 282-residue polypeptide: Armadillo repeat-containing protein 1 (282 aa).

An N-acetylmethionine modification is found at Met-1. Residues 39 to 81 (GCLPGLILFMDHPNPPVVHSALLALRYLAECRANREKMKGELG) form an ARM repeat. Residue Thr-137 is modified to Phosphothreonine. Phosphoserine occurs at positions 189, 246, 260, and 267. Residues 239-261 (DYLPEDESPTKEQDKAVSRVGSH) form a disordered region. Basic and acidic residues predominate over residues 246 to 255 (SPTKEQDKAV).

In terms of assembly, interacts with mitochondrial contact site and cristae organizing system (MICOS) complex components IMMT/MIC60 and MICOS10/MIC10. Interacts with mitochondrial outer membrane sorting assembly machinery (SAM) complex components SAMM50 and MTX1.

The protein localises to the cytoplasm. Its subcellular location is the mitochondrion. It is found in the mitochondrion outer membrane. In terms of biological role, in association with mitochondrial contact site and cristae organizing system (MICOS) complex components and mitochondrial outer membrane sorting assembly machinery (SAM) complex components may regulate mitochondrial dynamics playing a role in determining mitochondrial length, distribution and motility. The polypeptide is Armadillo repeat-containing protein 1 (Armc1) (Mus musculus (Mouse)).